The primary structure comprises 382 residues: MKTELSLLDRSLNLQRYPKRAQELLQAWDAGDEYIIKYVEEELNLEDGKNILILNDNFGALSCWFSDKHNVTMMTDSFVSQRGTLKNLQRNQCNRVQLITSTEEMPQGFDLVLMQIPKNNRMLTWQLQQLRQSMDSSCPIIAVNKAKEIHSSTLELFEDYLGETKTSLAWKKHRLVFSNANVSNPKTIAEAVCWSVDNEDIDLLNYPNVYSGEKLDQGARFMLDHIPSDPELRHIIDLGCGNGVLSVKAGQLNPEARITCVDESFMAVESAHRNLEVNLGKERQFQFIANNCLDGFKKHSSYLVLCNPPFHQGQAITDHIAWQMFCDAKHILCKDGKLLVIGNRHLDYDGKLCRLFGEENVTTVASNSKFVILEAVKAEKSK.

The protein belongs to the methyltransferase superfamily. RlmG family.

The protein resides in the cytoplasm. The catalysed reaction is guanosine(1835) in 23S rRNA + S-adenosyl-L-methionine = N(2)-methylguanosine(1835) in 23S rRNA + S-adenosyl-L-homocysteine + H(+). In terms of biological role, specifically methylates the guanine in position 1835 (m2G1835) of 23S rRNA. The sequence is that of Ribosomal RNA large subunit methyltransferase G from Aliivibrio fischeri (strain ATCC 700601 / ES114) (Vibrio fischeri).